A 127-amino-acid polypeptide reads, in one-letter code: Small ribosomal subunit protein uS12 (127 aa).

A 3-methylthioaspartic acid modification is found at Asp-89. The tract at residues 104–127 is disordered; that stretch reads TQGVKDRKQARSKYGTKRAKAGKK. The segment covering 113–127 has biased composition (basic residues); the sequence is ARSKYGTKRAKAGKK.

Belongs to the universal ribosomal protein uS12 family. In terms of assembly, part of the 30S ribosomal subunit. Contacts proteins S8 and S17. May interact with IF1 in the 30S initiation complex.

In terms of biological role, with S4 and S5 plays an important role in translational accuracy. Its function is as follows. Interacts with and stabilizes bases of the 16S rRNA that are involved in tRNA selection in the A site and with the mRNA backbone. Located at the interface of the 30S and 50S subunits, it traverses the body of the 30S subunit contacting proteins on the other side and probably holding the rRNA structure together. The combined cluster of proteins S8, S12 and S17 appears to hold together the shoulder and platform of the 30S subunit. The protein is Small ribosomal subunit protein uS12 of Herminiimonas arsenicoxydans.